The sequence spans 461 residues: CASP-like protein 4U1 (461 aa).

The disordered stretch occupies residues 1–239 (MASTPRTPAP…RAAETKLPLS (239 aa)). Topologically, residues 1-314 (MASTPRTPAP…AAVAVGERRE (314 aa)) are cytoplasmic. A compositionally biased stretch (pro residues) spans 7–69 (TPAPVRSPPP…PLETPPPPSP (63 aa)). Composition is skewed to low complexity over residues 116–126 (LSPMRLAAPRL) and 135–155 (TPTG…AAAG). A compositionally biased stretch (pro residues) spans 193–204 (SPSPSPTPPSPL). Residues 205 to 221 (TPAAAPVVNNNSNNKNN) are compositionally biased toward low complexity. The chain crosses the membrane as a helical span at residues 315 to 335 (LSVTLRLATAVLSLAAFSVIA). Residues 336-354 (SARTSGWAGDYYAHHLQYR) are Extracellular-facing. Residues 355-375 (YAVAVNVIVCAYSIAQSFGEI) traverse the membrane as a helical segment. Residues 376 to 392 (RRLISPRFIFRSMSSYY) lie on the Cytoplasmic side of the membrane. Residues 393 to 413 (CSLFLDQALAYLLMSASSAAA) form a helical membrane-spanning segment. Over 414–431 (SRNDLWVSRFGTDAFNRK) the chain is Extracellular. A helical transmembrane segment spans residues 432-452 (ITSALWLSFIAFLMLALNALI). Residues 453–461 (STANLFSML) lie on the Cytoplasmic side of the membrane.

It belongs to the Casparian strip membrane proteins (CASP) family. Homodimer and heterodimers.

It localises to the cell membrane. This Sorghum bicolor (Sorghum) protein is CASP-like protein 4U1.